The sequence spans 265 residues: ETS-related transcription factor Elf-5 (265 aa).

The 87-residue stretch at 43–129 (YPAFEHQTAC…FILQNIRTQG (87 aa)) folds into the PNT domain. Residues 173–254 (SHLWEFVRDL…VDRRLVYKFG (82 aa)) constitute a DNA-binding region (ETS).

Belongs to the ETS family. In terms of tissue distribution, expressed exclusively in tissues with a high content of epithelial cells. Highly expressed in salivary gland, mammary gland, kidney and prostate. Weakly expressed in placenta and lung. Isoform 1 and isoform 2 are differentially expressed in different tissues. In the kidney, only isoform 1 was expressed, while prostate expressed both isoforms, with levels of isoform 2 being higher. Expression is up-regulated during keratinocyte differentiation. Several epithelial carcinoma cell lines showed lack of expression.

It localises to the nucleus. Transcriptionally activator that may play a role in regulating the later stages of keratinocytes terminal differentiation. Its function is as follows. Isoform 2 binds to DNA sequences containing the consensus nucleotide core sequence GGA[AT]. Transcriptionally activates SPRR2A and the parotid gland-specific PSP promoters. In Homo sapiens (Human), this protein is ETS-related transcription factor Elf-5 (ELF5).